A 249-amino-acid polypeptide reads, in one-letter code: Probable transcriptional regulatory protein LBL_2537 (249 aa).

The protein belongs to the TACO1 family.

The protein resides in the cytoplasm. The sequence is that of Probable transcriptional regulatory protein LBL_2537 from Leptospira borgpetersenii serovar Hardjo-bovis (strain L550).